We begin with the raw amino-acid sequence, 415 residues long: Actin-like protein 9 (415 aa).

The disordered stretch occupies residues 1–22 (MDVNGHPKFQPSPETDGPLPLT).

The protein belongs to the actin family. Interacts with ACTL7A.

The protein localises to the cytoplasmic vesicle. It localises to the secretory vesicle. Its subcellular location is the acrosome. It is found in the cytoplasm. The protein resides in the cytoskeleton. The protein localises to the perinuclear theca. Its function is as follows. Testis-specic protein that plays an important role in fusion of proacrosomal vesicles and perinuclear theca formation. The polypeptide is Actin-like protein 9 (Actl9) (Mus musculus (Mouse)).